The sequence spans 271 residues: Plasmanylethanolamine desaturase 1 (271 aa).

Positions 1-25 are disordered; it reads MAGAEDAPGRQPELDEDETAEGRRW. 3 consecutive transmembrane segments (helical) span residues 48–68, 75–95, and 166–186; these read WCSV…LLLL, PLVI…SGLV, and LYPW…TNQI. The Histidine box-1 motif lies at 187–191; sequence HKWSH. The Histidine box-2 signature appears at 214 to 218; the sequence is HHRIH.

Belongs to the fatty acid desaturase CarF family.

Its subcellular location is the endoplasmic reticulum membrane. The catalysed reaction is a 1-(1,2-saturated alkyl)-2-acyl-sn-glycero-3-phosphoethanolamine + 2 Fe(II)-[cytochrome b5] + O2 + 2 H(+) = a 1-O-(1Z-alkenyl)-2-acyl-sn-glycero-3-phosphoethanolamine + 2 Fe(III)-[cytochrome b5] + 2 H2O. The enzyme catalyses a 1-O-hexadecyl-2-acyl-sn-glycero-3-phosphoethanolamine + 2 Fe(II)-[cytochrome b5] + O2 + 2 H(+) = a 1-O-(1Z-hexadecenyl)-2-acyl-sn-glycero-3-phosphoethanolamine + 2 Fe(III)-[cytochrome b5] + 2 H2O. It catalyses the reaction a 1-O-octadecyl-2-acyl-sn-glycero-3-phosphoethanolamine + 2 Fe(II)-[cytochrome b5] + O2 + 2 H(+) = a 1-O-(1Z-octadecenyl)-2-acyl-sn-glycero-3-phosphoethanolamine + 2 Fe(III)-[cytochrome b5] + 2 H2O. It carries out the reaction a 1-O-(9Z-octadecenyl)-2-acyl-sn-glycero-3-phosphoethanolamine + 2 Fe(II)-[cytochrome b5] + O2 + 2 H(+) = a 1-O-(1Z,9Z-octadecadienyl)-2-acyl-sn-glycero-3-phosphoethanolamine + 2 Fe(III)-[cytochrome b5] + 2 H2O. It participates in lipid metabolism; fatty acid metabolism. In terms of biological role, plasmanylethanolamine desaturase involved in plasmalogen biogenesis in the endoplasmic reticulum membrane. Plasmalogens are glycerophospholipids with a hydrocarbon chain linked by a vinyl ether bond at the glycerol sn-1 position, and are involved in antioxidative and signaling mechanisms. This is Plasmanylethanolamine desaturase 1 from Mus musculus (Mouse).